The sequence spans 481 residues: Cobyric acid synthase (481 aa).

The region spanning 248–435 (NTVIAVPMLP…LHGLFHGGAF (188 aa)) is the GATase cobBQ-type domain. Cys329 serves as the catalytic Nucleophile. The active site involves His427.

Belongs to the CobB/CobQ family. CobQ subfamily.

The protein operates within cofactor biosynthesis; adenosylcobalamin biosynthesis. Functionally, catalyzes amidations at positions B, D, E, and G on adenosylcobyrinic A,C-diamide. NH(2) groups are provided by glutamine, and one molecule of ATP is hydrogenolyzed for each amidation. The sequence is that of Cobyric acid synthase from Granulibacter bethesdensis (strain ATCC BAA-1260 / CGDNIH1).